The chain runs to 431 residues: tRNA(Ile)-lysidine synthase (431 aa).

Position 25–30 (Ser25–Ser30) interacts with ATP.

The protein belongs to the tRNA(Ile)-lysidine synthase family.

The protein localises to the cytoplasm. It catalyses the reaction cytidine(34) in tRNA(Ile2) + L-lysine + ATP = lysidine(34) in tRNA(Ile2) + AMP + diphosphate + H(+). Its function is as follows. Ligates lysine onto the cytidine present at position 34 of the AUA codon-specific tRNA(Ile) that contains the anticodon CAU, in an ATP-dependent manner. Cytidine is converted to lysidine, thus changing the amino acid specificity of the tRNA from methionine to isoleucine. The protein is tRNA(Ile)-lysidine synthase of Lactobacillus johnsonii (strain CNCM I-12250 / La1 / NCC 533).